A 389-amino-acid chain; its full sequence is 5-hydroxytryptamine receptor 1B (389 aa).

The interval 1-27 (MEDAGTPCAPPPPAGSQTGAPPANLSS) is disordered. Over 1 to 45 (MEDAGTPCAPPPPAGSQTGAPPANLSSAPHNCSAEGYIYQDSIAL) the chain is Extracellular. Residues 15 to 27 (GSQTGAPPANLSS) are compositionally biased toward polar residues. 2 N-linked (GlcNAc...) asparagine glycosylation sites follow: Asn-24 and Asn-31. The chain crosses the membrane as a helical span at residues 46-71 (PWKVLLAILLALLTLATTLSNAFVIA). Topologically, residues 72–85 (TVYRTRKLHTPANY) are cytoplasmic. A helical transmembrane segment spans residues 86–110 (LIASLAVTDLLVSILVMPISTMYAV). At 111-118 (TGRWTLGQ) the chain is on the extracellular side. A helical transmembrane segment spans residues 119-144 (VVCDLWLSSDITCCTASILHLCVIAL). Residues Cys-121 and Cys-198 are joined by a disulfide bond. The ergotamine site is built by Asp-128 and Thr-133. The DRY motif; important for ligand-induced conformation changes and signaling signature appears at 145-147 (DRY). Topologically, residues 145–164 (DRYWAITDAVEYSAKRTPKR) are cytoplasmic. The chain crosses the membrane as a helical span at residues 165 to 183 (AAVMIALVWVFSISISLPP). Over 184–204 (FFWRQAKAEEEVSDCVVNTDH) the chain is Extracellular. Val-200 contributes to the ergotamine binding site. A helical transmembrane segment spans residues 205–228 (ILYTVYSTVGAFYFPTLLLIALYG). Topologically, residues 229-314 (RIYVEARSRI…AARERKATKT (86 aa)) are cytoplasmic. Polar residues predominate over residues 258-271 (DSPGSTSSVTSVNS). The segment at 258 to 281 (DSPGSTSSVTSVNSRAPDVPSESG) is disordered. Residues 315–336 (LGIILGAFIVCWLPFFIISLVM) traverse the membrane as a helical segment. Residues 337–346 (PICKDACWFH) are Extracellular-facing. Residues 347–369 (LAIFDFFTWLGYLNSLINPIIYT) traverse the membrane as a helical segment. The NPxxY motif; important for ligand-induced conformation changes and signaling motif lies at 364-368 (NPIIY). The Cytoplasmic portion of the chain corresponds to 370–389 (MSNEDFKQAFHKLIRFKCAS). Cys-387 carries the S-palmitoyl cysteine lipid modification.

Belongs to the G-protein coupled receptor 1 family. In terms of assembly, homodimer. Heterodimer with HTR1D. Post-translationally, phosphorylated. Desensitization of the receptor may be mediated by its phosphorylation. In terms of processing, palmitoylated.

It is found in the cell membrane. G-protein coupled receptor for 5-hydroxytryptamine (serotonin). Also functions as a receptor for ergot alkaloid derivatives, various anxiolytic and antidepressant drugs and other psychoactive substances, such as lysergic acid diethylamide (LSD). Ligand binding causes a conformation change that triggers signaling via guanine nucleotide-binding proteins (G proteins) and modulates the activity of downstream effectors, such as adenylate cyclase. HTR1B is coupled to G(i)/G(o) G alpha proteins and mediates inhibitory neurotransmission by inhibiting adenylate cyclase activity. Arrestin family members inhibit signaling via G proteins and mediate activation of alternative signaling pathways. Regulates the release of 5-hydroxytryptamine, dopamine and acetylcholine in the brain, and thereby affects neural activity, nociceptive processing, pain perception, mood and behavior. Besides, plays a role in vasoconstriction of cerebral arteries. The protein is 5-hydroxytryptamine receptor 1B (HTR1B) of Vulpes vulpes (Red fox).